Consider the following 363-residue polypeptide: Chorismate synthase (363 aa).

Arg47 serves as a coordination point for NADP(+). Residues 124 to 126 (RAS), Gly286, 301 to 305 (KPTAT), and Arg327 contribute to the FMN site.

This sequence belongs to the chorismate synthase family. As to quaternary structure, homotetramer. Requires FMNH2 as cofactor.

The catalysed reaction is 5-O-(1-carboxyvinyl)-3-phosphoshikimate = chorismate + phosphate. The protein operates within metabolic intermediate biosynthesis; chorismate biosynthesis; chorismate from D-erythrose 4-phosphate and phosphoenolpyruvate: step 7/7. Catalyzes the anti-1,4-elimination of the C-3 phosphate and the C-6 proR hydrogen from 5-enolpyruvylshikimate-3-phosphate (EPSP) to yield chorismate, which is the branch point compound that serves as the starting substrate for the three terminal pathways of aromatic amino acid biosynthesis. This reaction introduces a second double bond into the aromatic ring system. This chain is Chorismate synthase, found in Prochlorococcus marinus (strain MIT 9211).